The chain runs to 101 residues: Small ribosomal subunit protein eS24 (101 aa).

This sequence belongs to the eukaryotic ribosomal protein eS24 family.

The polypeptide is Small ribosomal subunit protein eS24 (Methanosarcina barkeri (strain Fusaro / DSM 804)).